Here is a 64-residue protein sequence, read N- to C-terminus: Large ribosomal subunit protein uL29 (64 aa).

Belongs to the universal ribosomal protein uL29 family.

This chain is Large ribosomal subunit protein uL29, found in Burkholderia mallei (strain NCTC 10247).